The chain runs to 176 residues: Protein CURLY FLAG LEAF 2 (176 aa).

Positions 41–46 (FLELSS) match the EAR motif. In terms of domain architecture, WW spans 48-82 (FSVPSHLEQCLDLKTGEIYYRSWNSGMRVKEDPRK). 2 disordered regions span residues 77 to 106 (KEDP…SSEE) and 111 to 130 (YESE…YHKE). Residues 93-106 (SSGESSGTVFSSEE) show a composition bias toward low complexity.

As to quaternary structure, may interact with BHLH122/CFLAP1 and BHLH80/CFLAP2.

May negatively regulate the cuticle development by interacting with the HD-ZIP IV transcription factor HDG1. The polypeptide is Protein CURLY FLAG LEAF 2 (Arabidopsis thaliana (Mouse-ear cress)).